The sequence spans 950 residues: Coiled-coil domain-containing protein 80 (950 aa).

The signal sequence occupies residues 1–21 (MTWRMGPRFTMLLAMWLVCGS). Disordered regions lie at residues 28–64 (TIRGSHGGRKVPLVSPDSSRPARFLRHTGRSRGIERS), 88–119 (PTEPPARSDINGAAVRPEQRPAARGSPREMIR), and 289–609 (QVVA…QSPK). Basic and acidic residues-rich tracts occupy residues 104-119 (PEQRPAARGSPREMIR) and 308-317 (SEKKKEDPRR). Residues 348 to 374 (PRATTLPPAPATTVTRSTSRAVTVAAR) are compositionally biased toward low complexity. The segment covering 376–385 (MTTTAFPTTQ) has biased composition (polar residues). Residues 418 to 428 (SRKDQHRERPQ) show a composition bias toward basic and acidic residues. Polar residues predominate over residues 435–454 (KATSLESFTNAPPTTISEPS). 3 stretches are compositionally biased toward basic and acidic residues: residues 462-478 (RFRDNRMDRREHGHRDP), 487-499 (PAKEKPPKKKAQD), and 538-582 (KKHE…EKEK). Residues lysine 545 and lysine 548 each participate in a glycyl lysine isopeptide (Lys-Gly) (interchain with G-Cter in SUMO2) cross-link. Positions 560–587 (DKLLKSEKQMKKSEKKSKQEKEKSKKKK) form a coiled coil. A compositionally biased stretch (polar residues) spans 598-609 (KPTNKHFTQSPK).

This sequence belongs to the CCDC80 family. As to quaternary structure, binds to various extracellular matrix proteins. Phosphorylated. As to expression, expressed in dermal papilla and dermal fibroblasts (at protein level). Expressed in heart, thymus, placenta, pancreas, colon, epithelium, spleen and osteoblasts.

It is found in the secreted. It localises to the extracellular space. The protein resides in the extracellular matrix. In terms of biological role, promotes cell adhesion and matrix assembly. This Homo sapiens (Human) protein is Coiled-coil domain-containing protein 80 (CCDC80).